An 820-amino-acid chain; its full sequence is Mediator of RNA polymerase II transcription subunit 16 (820 aa).

3 WD repeats span residues 74–114 (SNKY…SEWK), 621–665 (RSFM…PVFS), and 757–811 (SNDN…KCRC).

Belongs to the Mediator complex subunit 16 family. Component of the Mediator complex.

The protein localises to the nucleus. Its function is as follows. Component of the Mediator complex, a coactivator involved in the regulated transcription of nearly all RNA polymerase II-dependent genes. Mediator functions as a bridge to convey information from gene-specific regulatory proteins to the basal RNA polymerase II transcription machinery. Mediator is recruited to promoters by direct interactions with regulatory proteins and serves as a scaffold for the assembly of a functional preinitiation complex with RNA polymerase II and the general transcription factors. In Aedes aegypti (Yellowfever mosquito), this protein is Mediator of RNA polymerase II transcription subunit 16 (MED16).